A 447-amino-acid chain; its full sequence is Methylenetetrahydrofolate--tRNA-(uracil-5-)-methyltransferase TrmFO (447 aa).

Position 9–14 (9–14 (GGGLAG)) interacts with FAD.

This sequence belongs to the MnmG family. TrmFO subfamily. FAD is required as a cofactor.

The protein localises to the cytoplasm. The enzyme catalyses uridine(54) in tRNA + (6R)-5,10-methylene-5,6,7,8-tetrahydrofolate + NADH + H(+) = 5-methyluridine(54) in tRNA + (6S)-5,6,7,8-tetrahydrofolate + NAD(+). It catalyses the reaction uridine(54) in tRNA + (6R)-5,10-methylene-5,6,7,8-tetrahydrofolate + NADPH + H(+) = 5-methyluridine(54) in tRNA + (6S)-5,6,7,8-tetrahydrofolate + NADP(+). In terms of biological role, catalyzes the folate-dependent formation of 5-methyl-uridine at position 54 (M-5-U54) in all tRNAs. The sequence is that of Methylenetetrahydrofolate--tRNA-(uracil-5-)-methyltransferase TrmFO from Paramagnetospirillum magneticum (strain ATCC 700264 / AMB-1) (Magnetospirillum magneticum).